The primary structure comprises 154 residues: MSAYLFLLMLVLIGVISNNQSVIIASSVLLIIKAIGFGDQLFPTLASKGISWGVTIITIAVLVPIATGDIGFKELWNSIKGPVGIVAFASGMFVAIAAGQGVQLMRVDPVVTTALLAGTILAVGFMKGIPVGPLVGAGIAALILGGYQVIEKWF.

A run of 5 helical transmembrane segments spans residues 5–25 (LFLLMLVLIGVISNNQSVIIA), 52–72 (WGVTIITIAVLVPIATGDIGF), 82–102 (PVGIVAFASGMFVAIAAGQGV), 107–127 (VDPVVTTALLAGTILAVGFMK), and 129–149 (IPVGPLVGAGIAALILGGYQV).

This sequence belongs to the UPF0756 family.

It localises to the cell membrane. In Exiguobacterium sp. (strain ATCC BAA-1283 / AT1b), this protein is UPF0756 membrane protein EAT1b_0668.